We begin with the raw amino-acid sequence, 124 residues long: Small ribosomal subunit protein bS6 (124 aa).

This sequence belongs to the bacterial ribosomal protein bS6 family.

Its function is as follows. Binds together with bS18 to 16S ribosomal RNA. This chain is Small ribosomal subunit protein bS6, found in Bordetella avium (strain 197N).